Here is a 147-residue protein sequence, read N- to C-terminus: Allograft inflammatory factor 1 (147 aa).

Position 2 is an N-acetylserine (S2). K11 carries the N6-acetyllysine modification. At S39 the chain carries Phosphoserine. The EF-hand 1 domain maps to 45-80; the sequence is SKLEGFKEKYMEFDLNGNGDIDIMSLKRMLEKLGVP. Residues D58, N60, N62, D64, T100, and D105 each contribute to the Ca(2+) site. In terms of domain architecture, EF-hand 2; degenerate spans 81 to 115; that stretch reads KTHLELKKLIGEVSSGSGETFSYPDFLRMMLGKRS. Positions 128-147 are disordered; the sequence is AREKEKPTGPPAKKAISELP.

Homodimer (Potential). Monomer. Interacts with LCP1. Post-translationally, phosphorylated on serine residues. In terms of tissue distribution, detected in T-lymphocytes and peripheral blood mononuclear cells.

It localises to the cytoplasm. It is found in the cytoskeleton. The protein localises to the cell projection. The protein resides in the ruffle membrane. Its subcellular location is the phagocytic cup. Its function is as follows. Actin-binding protein that enhances membrane ruffling and RAC activation. Enhances the actin-bundling activity of LCP1. Binds calcium. Plays a role in RAC signaling and in phagocytosis. May play a role in macrophage activation and function. Promotes the proliferation of vascular smooth muscle cells and of T-lymphocytes. Enhances lymphocyte migration. Plays a role in vascular inflammation. This Homo sapiens (Human) protein is Allograft inflammatory factor 1 (AIF1).